A 790-amino-acid polypeptide reads, in one-letter code: MLAIRSSNYLRCIPSLCTKTQISQFSSVLISFSRQISHLRLSSCHRAMSSSRPSAFDALMSNARAAAKKKTPQTTNLSRSPNKRKIGETQDANLGKTIVSEGTLPKTEDLLEPVSDSANPRSDTSSIAEDSKTGAKKAKTLSKTDEMKSKIGLLKKKPNDFDPEKMSCWEKGERVPFLFVALAFDLISNESGRIVITDILCNMLRTVIATTPEDLVATVYLSANEIAPAHEGVELGIGESTIIKAISEAFGRTEDHVKKQNTELGDLGLVAKGSRSTQTMMFKPEPLTVVKVFDTFRQIAKESGKDSNEKKKNRMKALLVATTDCEPLYLTRLLQAKLRLGFSGQTVLAALGQAAVYNEEHSKPPPNTKSPLEEAAKIVKQVFTVLPVYDIIVPALLSGGVWNLPKTCNFTLGVPIGPMLAKPTKGVAEILNKFQDIVFTCEYKYDGERAQIHFMEDGTFEIYSRNAERNTGKYPDVALALSRLKKPSVKSFILDCEVVAFDREKKKILPFQILSTRARKNVNVNDIKVGVCIFAFDMLYLNGQQLIQENLKIRREKLYESFEEDPGYFQFATAVTSNDIDEIQKFLDASVDVGCEGLIIKTLDSDATYEPAKRSNNWLKLKKDYMDSIGDSVDLVPIAAFHGRGKRTGVYGAFLLACYDVDKEEFQSICKIGTGFSDAMLDERSSSLRSQVIATPKQYYRVGDSLNPDVWFEPTEVWEVKAADLTISPVHRAATGIVDPDKGISLRFPRLLRVREDKKPEEATSSEQIADLYQAQKHNHPSNEVKGDDD.

The transit peptide at 1–64 directs the protein to the mitochondrion; that stretch reads MLAIRSSNYL…AFDALMSNAR (64 aa). The tract at residues 64-142 is disordered; sequence RAAAKKKTPQ…TGAKKAKTLS (79 aa). The Nuclear localization signal 1 motif lies at 68–75; that stretch reads KKKTPQTT. The segment covering 116–128 has biased composition (polar residues); the sequence is DSANPRSDTSSIA. Residues 337 to 346 are interaction with target DNA; that stretch reads KLRLGFSGQT. Glu-442 serves as a coordination point for ATP. Lys-444 (N6-AMP-lysine intermediate) is an active-site residue. Arg-449 and Arg-465 together coordinate ATP. Residue Glu-497 participates in Mg(2+) binding. The Nuclear localization signal 2 signature appears at 505-512; that stretch reads KKKILPFQ. The segment at 518–520 is interaction with target DNA; the sequence is ARK. Glu-596 lines the Mg(2+) pocket. Residues Lys-601, Arg-614, and Lys-620 each coordinate ATP. The disordered stretch occupies residues 757 to 790; the sequence is DKKPEEATSSEQIADLYQAQKHNHPSNEVKGDDD. A compositionally biased stretch (basic and acidic residues) spans 781–790; it reads PSNEVKGDDD.

The protein belongs to the ATP-dependent DNA ligase family. It depends on Mg(2+) as a cofactor. Expressed in all vegetative and reproductive tissues.

It localises to the mitochondrion. Its subcellular location is the nucleus. The enzyme catalyses ATP + (deoxyribonucleotide)n-3'-hydroxyl + 5'-phospho-(deoxyribonucleotide)m = (deoxyribonucleotide)n+m + AMP + diphosphate.. In terms of biological role, essential protein. DNA ligase that seals nicks in double-stranded DNA during DNA replication, DNA recombination and DNA repair. Involved in repair of both single strand breaks (SSBs) and double strand breaks (DSBs). Required in the endosperm for embryogenesis, probably to repair DNA-breaks generated by DME. The chain is DNA ligase 1 (LIG1) from Arabidopsis thaliana (Mouse-ear cress).